The sequence spans 354 residues: Kelch domain-containing protein 8B (354 aa).

8 Kelch repeats span residues M1 to G31, H32 to K79, V81 to G127, M128 to N175, K176 to G222, V224 to G281, H282 to P329, and L331 to V354.

The protein resides in the cytoplasm. Its subcellular location is the midbody. In terms of biological role, involved in pinching off the separated nuclei at the cleavage furrow and in cytokinesis. Required for mitotic integrity and maintenance of chromosomal stability. Protects cells against mitotic errors, centrosomal amplification, micronucleus formation and aneuploidy. Plays a key role of midbody function involving abscission of the daughter cells during cytokinesis and appropriate chromosomal and nuclear segregation into the daughter cells. This chain is Kelch domain-containing protein 8B, found in Homo sapiens (Human).